The primary structure comprises 25 residues: Germin-like protein (25 aa).

This sequence belongs to the germin family. As to quaternary structure, oligomer (believed to be a pentamer but probably hexamer). The three different mass spectrometry results appear to arise from different glycosylation variants.

The protein localises to the secreted. It localises to the extracellular space. It is found in the apoplast. Its function is as follows. May play a role in plant defense. Probably has no oxalate oxidase activity even if the active site is conserved. This Citrus sinensis (Sweet orange) protein is Germin-like protein.